Reading from the N-terminus, the 300-residue chain is Geranyl diphosphate 2-C-methyltransferase (300 aa).

The interval 1 to 24 is disordered; the sequence is MAAASAPVPGPGGASSTARGRIPA.

It belongs to the geranyl diphosphate 2-C-methyltransferase family. The cofactor is Mg(2+).

It catalyses the reaction (2E)-geranyl diphosphate + S-adenosyl-L-methionine = (E)-2-methylgeranyl diphosphate + S-adenosyl-L-homocysteine + H(+). Catalyzes the SAM-dependent methylation of geranyl diphosphate (GPP) to yield (E)-2-methylgeranyl diphosphate (2-MeGPP). The chain is Geranyl diphosphate 2-C-methyltransferase (gdpmt) from Streptomyces lasalocidi (Streptomyces lasaliensis).